The chain runs to 166 residues: MAKSIIIQAPALCFLSLLGFAYSESRFFVEGKVYCDNCRTQFVTKLSTYMKGAKVSLECRNREGGTLIYSSDSETDKSGTYRIPVDGDHEEEICEIALKKSSDPDCSEVSKDPFLKKSARISLTKNNGISTPVRLANPLGFMKKKPLPECAKALRELGMNPDDVIQ.

An N-terminal signal peptide occupies residues 1 to 23 (MAKSIIIQAPALCFLSLLGFAYS). 3 disulfide bridges follow: cysteine 35/cysteine 106, cysteine 38/cysteine 150, and cysteine 59/cysteine 94.

This sequence belongs to the Ole e I family.

It is found in the secreted. The polypeptide is Olee1-like protein (Betula pendula (European white birch)).